We begin with the raw amino-acid sequence, 142 residues long: Deoxyuridine 5'-triphosphate nucleotidohydrolase (142 aa).

Substrate is bound by residues 62–64 (RSG), Asn-75, and 79–81 (TID).

This sequence belongs to the dUTPase family. The cofactor is Mg(2+).

It carries out the reaction dUTP + H2O = dUMP + diphosphate + H(+). It functions in the pathway pyrimidine metabolism; dUMP biosynthesis; dUMP from dCTP (dUTP route): step 2/2. This enzyme is involved in nucleotide metabolism: it produces dUMP, the immediate precursor of thymidine nucleotides and it decreases the intracellular concentration of dUTP so that uracil cannot be incorporated into DNA. The chain is Deoxyuridine 5'-triphosphate nucleotidohydrolase from Trichodesmium erythraeum (strain IMS101).